We begin with the raw amino-acid sequence, 655 residues long: Putative sensor protein Sfri_3689 (655 aa).

Positions 1-17 (MKTLLLLLIIITMPVLA) are cleaved as a signal peptide. The chain crosses the membrane as a helical span at residues 252 to 272 (FALAILVAIMSAIGMIFTGFI). A Histidine kinase domain is found at 419 to 653 (GIAHEINNPT…QIRLIFALAQ (235 aa)). Residue His422 is modified to Phosphohistidine; by autocatalysis.

It localises to the cell membrane. The enzyme catalyses ATP + protein L-histidine = ADP + protein N-phospho-L-histidine.. This is Putative sensor protein Sfri_3689 from Shewanella frigidimarina (strain NCIMB 400).